The following is a 955-amino-acid chain: Protein MEI2-like 3 (955 aa).

The segment at 64-83 (IQPNGANHAGDPETPGGQAF) is disordered. RRM domains lie at 270–343 (RTLV…FSFP) and 355–428 (GMLV…LSQH). 2 disordered regions span residues 436–465 (RQQH…KLGT) and 897–955 (NAGD…LEQT). Over residues 935–955 (DQESNSVGTANSTCRTTLEQT) the composition is skewed to polar residues.

In terms of biological role, probable RNA-binding protein that may play a role in growth regulation. The protein is Protein MEI2-like 3 (ML3) of Oryza sativa subsp. japonica (Rice).